Reading from the N-terminus, the 104-residue chain is Thioredoxin-2 (104 aa).

The 103-residue stretch at 2 to 104 (VTQLKSASEY…AIKQAIASNV (103 aa)) folds into the Thioredoxin domain. Active-site nucleophile residues include Cys31 and Cys34. A disulfide bond links Cys31 and Cys34. Ser62 carries the post-translational modification Phosphoserine. Residues Lys67 and Lys97 each participate in a glycyl lysine isopeptide (Lys-Gly) (interchain with G-Cter in ubiquitin) cross-link.

This sequence belongs to the thioredoxin family. Monomer. Part of the heterodimeric LMA1 complex together with the proteinase inhibitor PBI2. LMA1 binds to the ATPase SEC18. Post-translationally, reversible disulfide bond formation between Cys-31 and Cys-34, reverted by thioredoxin reductase TRR1 using NADPH as hydrogen donor.

It localises to the cytoplasm. The protein resides in the golgi apparatus membrane. Its subcellular location is the nucleus. Participates as a hydrogen donor in redox reactions through the reversible oxidation of its active center dithiol to a disulfide, accompanied by the transfer of 2 electrons and 2 protons. It is involved in many cellular processes, including deoxyribonucleotide synthesis, repair of oxidatively damaged proteins, protein folding, sulfur metabolism, and redox homeostasis. Thioredoxin-dependent enzymes include phosphoadenosine-phosphosulfate reductase MET16, alkyl-hydroperoxide reductase DOT5, thioredoxin peroxidases TSA1 and TSA2, alkyl hydroperoxide reductase AHP1, and peroxiredoxin HYR1. Thioredoxin is also involved in protection against reducing stress. As part of the LMA1 complex, it is involved in the facilitation of vesicle fusion such as homotypic vacuole and ER-derived COPII vesicle fusion with the Golgi. This activity does not require the redox mechanism. Through its capacity to inactivate the stress response transcription factor YAP1 and its regulator the hydroperoxide stress sensor HYR1, it is involved in feedback regulation of stress response gene expression upon oxidative stress. The protein is Thioredoxin-2 (TRX2) of Saccharomyces cerevisiae (strain ATCC 204508 / S288c) (Baker's yeast).